Here is a 335-residue protein sequence, read N- to C-terminus: Ornithine carbamoyltransferase (335 aa).

Carbamoyl phosphate is bound by residues 57–60, R108, and 135–138; these read STRT and HPTQ. L-ornithine contacts are provided by residues N168, D232, and 236–237; that span reads SM. Residues 274–275 and R319 each bind carbamoyl phosphate; that span reads CL.

Belongs to the aspartate/ornithine carbamoyltransferase superfamily. OTCase family.

The protein resides in the cytoplasm. The catalysed reaction is carbamoyl phosphate + L-ornithine = L-citrulline + phosphate + H(+). It participates in amino-acid degradation; L-arginine degradation via ADI pathway; carbamoyl phosphate from L-arginine: step 2/2. Reversibly catalyzes the transfer of the carbamoyl group from carbamoyl phosphate (CP) to the N(epsilon) atom of ornithine (ORN) to produce L-citrulline. The sequence is that of Ornithine carbamoyltransferase from Limosilactobacillus reuteri (strain DSM 20016) (Lactobacillus reuteri).